The primary structure comprises 344 residues: Geranylgeranyl pyrophosphate synthase 10, mitochondrial (344 aa).

A mitochondrion-targeting transit peptide spans 1-40; sequence MENREVFVYIVISIFRSLQFLFWRFRPRYNDVTSALTRPL. Isopentenyl diphosphate is bound by residues K91, R94, and H123. Positions 130 and 136 each coordinate Mg(2+). R141 lines the dimethylallyl diphosphate pocket. R142 provides a ligand contact to isopentenyl diphosphate. Positions 229, 230, 267, 284, and 294 each coordinate dimethylallyl diphosphate.

This sequence belongs to the FPP/GGPP synthase family. Monomer. The cofactor is Mg(2+).

The protein resides in the mitochondrion. It carries out the reaction isopentenyl diphosphate + dimethylallyl diphosphate = (2E)-geranyl diphosphate + diphosphate. The catalysed reaction is isopentenyl diphosphate + (2E)-geranyl diphosphate = (2E,6E)-farnesyl diphosphate + diphosphate. The enzyme catalyses isopentenyl diphosphate + (2E,6E)-farnesyl diphosphate = (2E,6E,10E)-geranylgeranyl diphosphate + diphosphate. The protein operates within isoprenoid biosynthesis; farnesyl diphosphate biosynthesis; farnesyl diphosphate from geranyl diphosphate and isopentenyl diphosphate: step 1/1. Its pathway is isoprenoid biosynthesis; geranyl diphosphate biosynthesis; geranyl diphosphate from dimethylallyl diphosphate and isopentenyl diphosphate: step 1/1. It participates in isoprenoid biosynthesis; geranylgeranyl diphosphate biosynthesis; geranylgeranyl diphosphate from farnesyl diphosphate and isopentenyl diphosphate: step 1/1. Catalyzes the trans-addition of the three molecules of IPP onto DMAPP to form geranylgeranyl pyrophosphate. The protein is Geranylgeranyl pyrophosphate synthase 10, mitochondrial of Arabidopsis thaliana (Mouse-ear cress).